We begin with the raw amino-acid sequence, 332 residues long: Ribosomal RNA small subunit methyltransferase C (332 aa).

This sequence belongs to the methyltransferase superfamily. RsmC family. Monomer.

The protein localises to the cytoplasm. The enzyme catalyses guanosine(1207) in 16S rRNA + S-adenosyl-L-methionine = N(2)-methylguanosine(1207) in 16S rRNA + S-adenosyl-L-homocysteine + H(+). In terms of biological role, specifically methylates the guanine in position 1207 of 16S rRNA in the 30S particle. In Pseudomonas entomophila (strain L48), this protein is Ribosomal RNA small subunit methyltransferase C.